The sequence spans 248 residues: 14-3-3 protein homolog 2 (248 aa).

It belongs to the 14-3-3 family.

This chain is 14-3-3 protein homolog 2, found in Echinococcus granulosus (Hydatid tapeworm).